We begin with the raw amino-acid sequence, 254 residues long: Type III pantothenate kinase (254 aa).

An ATP-binding site is contributed by 6–13; that stretch reads DVGNTNTV. Residues Tyr-100 and 107 to 110 contribute to the substrate site; that span reads GADR. Asp-109 (proton acceptor) is an active-site residue. Residue Asp-129 participates in K(+) binding. Position 132 (Thr-132) interacts with ATP. Residue Thr-184 participates in substrate binding.

This sequence belongs to the type III pantothenate kinase family. As to quaternary structure, homodimer. It depends on NH4(+) as a cofactor. K(+) serves as cofactor.

The protein resides in the cytoplasm. It catalyses the reaction (R)-pantothenate + ATP = (R)-4'-phosphopantothenate + ADP + H(+). Its pathway is cofactor biosynthesis; coenzyme A biosynthesis; CoA from (R)-pantothenate: step 1/5. Catalyzes the phosphorylation of pantothenate (Pan), the first step in CoA biosynthesis. The chain is Type III pantothenate kinase from Syntrophus aciditrophicus (strain SB).